Reading from the N-terminus, the 163-residue chain is NADH-quinone oxidoreductase subunit I (163 aa).

2 4Fe-4S ferredoxin-type domains span residues 54 to 84 (LRRY…IDSH) and 94 to 123 (TRYD…LTRL). The [4Fe-4S] cluster site is built by Cys64, Cys67, Cys70, Cys74, Cys103, Cys106, Cys109, and Cys113.

Belongs to the complex I 23 kDa subunit family. NDH-1 is composed of 14 different subunits. Subunits NuoA, H, J, K, L, M, N constitute the membrane sector of the complex. [4Fe-4S] cluster is required as a cofactor.

It localises to the cell inner membrane. The catalysed reaction is a quinone + NADH + 5 H(+)(in) = a quinol + NAD(+) + 4 H(+)(out). In terms of biological role, NDH-1 shuttles electrons from NADH, via FMN and iron-sulfur (Fe-S) centers, to quinones in the respiratory chain. The immediate electron acceptor for the enzyme in this species is believed to be ubiquinone. Couples the redox reaction to proton translocation (for every two electrons transferred, four hydrogen ions are translocated across the cytoplasmic membrane), and thus conserves the redox energy in a proton gradient. This Halorhodospira halophila (strain DSM 244 / SL1) (Ectothiorhodospira halophila (strain DSM 244 / SL1)) protein is NADH-quinone oxidoreductase subunit I.